Here is a 363-residue protein sequence, read N- to C-terminus: Peroxin-36 (363 aa).

Over 1-193 (MSNLEKQIRL…ESFFINSFEQ (193 aa)) the chain is Cytoplasmic. 2 disordered regions span residues 71–114 (QNHQ…DTST) and 128–157 (TNSN…SKSG). Residues 97–114 (VDSNSDSSSSETLIDTST) are compositionally biased toward low complexity. The chain crosses the membrane as a helical span at residues 194 to 213 (LIALFDNFYFLSSLIGFNTS). Residues 214 to 232 (NSNSKITRLLRNFIKQASK) lie on the Peroxisomal side of the membrane. A helical membrane pass occupies residues 233–250 (IWLVIIFLTVKNLFIRMI). Topologically, residues 251–363 (KLNRTEKKVK…SSDDIIDEYA (113 aa)) are cytoplasmic.

The protein localises to the peroxisome membrane. Functionally, controls peroxisome morphology and abundance under conditions of peroxisome proliferation such as oleate and methanol media. Has additional function(s), which is not present in its functional homologs such as Saccharomyces cerevisea PEX34 or human PEX16. This is Peroxin-36 from Komagataella phaffii (strain GS115 / ATCC 20864) (Yeast).